Consider the following 21-residue polypeptide: Histone H2B 1 (21 aa).

The tract at residues 1 to 21 is disordered; that stretch reads MPDPAKTAPKKGSKKAVTKXA. N6-acetyllysine occurs at positions 6 and 11. Over residues 8-21 the composition is skewed to basic residues; the sequence is APKKGSKKAVTKXA. Phosphoserine is present on S13. N6-acetyllysine is present on residues K14 and K19. K19 is covalently cross-linked (Glycyl lysine isopeptide (Lys-Gly) (interchain with G-Cter in ubiquitin)).

This sequence belongs to the histone H2B family. In terms of assembly, the nucleosome is a histone octamer containing two molecules each of H2A, H2B, H3 and H4 assembled in one H3-H4 heterotetramer and two H2A-H2B heterodimers. The octamer wraps approximately 147 bp of DNA. Monoubiquitination at the C-terminal Lys gives a specific tag for epigenetic transcriptional activation and is also prerequisite for histone H3 'Lys-4' and 'Lys-79' methylation. Post-translationally, phosphorylated during apoptosis; which facilitates apoptotic chromatin condensation.

It is found in the nucleus. It localises to the chromosome. In terms of biological role, core component of nucleosome. Nucleosomes wrap and compact DNA into chromatin, limiting DNA accessibility to the cellular machineries which require DNA as a template. Histones thereby play a central role in transcription regulation, DNA repair, DNA replication and chromosomal stability. DNA accessibility is regulated via a complex set of post-translational modifications of histones, also called histone code, and nucleosome remodeling. Has broad-spectrum antimicrobial and antibacterial activity. It is important in the antimicrobial defenses of fish skin and possesses strong activity against saprolegnia, the most common fungal infection in fish. It is also inhibitory to fish bacterial pathogens, such as aeromonas hydrophila, vibrio alginolyticus and E.coli D31. The sequence is that of Histone H2B 1 from Ictalurus punctatus (Channel catfish).